Here is a 307-residue protein sequence, read N- to C-terminus: tRNA dimethylallyltransferase (307 aa).

Glycine 9–threonine 16 serves as a coordination point for ATP. Substrate is bound at residue threonine 11–threonine 16. The interval aspartate 34–glutamine 37 is interaction with substrate tRNA.

Belongs to the IPP transferase family. In terms of assembly, monomer. Requires Mg(2+) as cofactor.

It carries out the reaction adenosine(37) in tRNA + dimethylallyl diphosphate = N(6)-dimethylallyladenosine(37) in tRNA + diphosphate. In terms of biological role, catalyzes the transfer of a dimethylallyl group onto the adenine at position 37 in tRNAs that read codons beginning with uridine, leading to the formation of N6-(dimethylallyl)adenosine (i(6)A). This is tRNA dimethylallyltransferase from Levilactobacillus brevis (strain ATCC 367 / BCRC 12310 / CIP 105137 / JCM 1170 / LMG 11437 / NCIMB 947 / NCTC 947) (Lactobacillus brevis).